Consider the following 331-residue polypeptide: Cytoplasmic envelopment protein 1 (331 aa).

It belongs to the herpesviridae cytoplasmic envelopment protein 1 family. In terms of assembly, interacts with protein ORF7; this interaction localizes protein ORF53 to the host trans-Golgi network (TGN).

It is found in the virion. The protein resides in the virion tegument. The protein localises to the host cytoplasm. Its subcellular location is the host Golgi apparatus. Plays a critical role in cytoplasmic virus egress. Participates in the final step of tegumentation and envelope acquisition within the host cytoplasm. In Varicella-zoster virus (strain Dumas) (HHV-3), this protein is Cytoplasmic envelopment protein 1 (ORF53).